We begin with the raw amino-acid sequence, 37 residues long: Mu-agatoxin-Aa1f (37 aa).

Cystine bridges form between Cys-2–Cys-18, Cys-9–Cys-23, Cys-17–Cys-33, and Cys-25–Cys-31. Asn-37 carries the asparagine amide modification.

Belongs to the neurotoxin 07 (Beta/delta-agtx) family. 03 (aga-4) subfamily. Aga sub-subfamily. Expressed by the venom gland.

The protein localises to the secreted. In terms of biological role, insecticidal neurotoxin that induces an irreversible spastic paralysis when injected into insects. Modifies presynaptic voltage-gated sodium channels (Nav), causing them to open at the normal resting potential of the nerve. This leads to spontaneous release of neurotransmitter and repetitive action potentials in motor neurons. In Agelenopsis aperta (North American funnel-web spider), this protein is Mu-agatoxin-Aa1f.